Here is a 160-residue protein sequence, read N- to C-terminus: uncharacterized protein (160 aa).

This is an uncharacterized protein from Human cytomegalovirus (strain AD169) (HHV-5).